Reading from the N-terminus, the 500-residue chain is Probable malate:quinone oxidoreductase (500 aa).

The protein belongs to the MQO family. FAD serves as cofactor.

The enzyme catalyses (S)-malate + a quinone = a quinol + oxaloacetate. Its pathway is carbohydrate metabolism; tricarboxylic acid cycle; oxaloacetate from (S)-malate (quinone route): step 1/1. The chain is Probable malate:quinone oxidoreductase from Bacillus cereus (strain B4264).